Here is a 155-residue protein sequence, read N- to C-terminus: Acyl-CoA-binding domain-containing protein 3 (155 aa).

Residues 3–88 enclose the ACB domain; it reads LQEDFEEYAE…VKQLQEEAAA (86 aa). An acyl-CoA is bound by residues Lys15, 30–34, Lys56, and Tyr75; that span reads YGLYK.

Belongs to the ACBP family. As to expression, highly expressed in leaves. Expressed at low levels in roots and seeds.

It localises to the cytoplasm. It is found in the cytosol. In terms of biological role, binds medium- and long-chain acyl-CoA esters with high affinity. Can interact in vitro with linolenoyl-CoA. Binds phosphatidic acid (PA) and phosphatidylcholine (PC) in vitro. May play a role in the biosynthesis of phospholipids. This is Acyl-CoA-binding domain-containing protein 3 from Oryza sativa subsp. japonica (Rice).